A 119-amino-acid polypeptide reads, in one-letter code: Ribonuclease P protein component (119 aa).

Belongs to the RnpA family. In terms of assembly, consists of a catalytic RNA component (M1 or rnpB) and a protein subunit.

The enzyme catalyses Endonucleolytic cleavage of RNA, removing 5'-extranucleotides from tRNA precursor.. RNaseP catalyzes the removal of the 5'-leader sequence from pre-tRNA to produce the mature 5'-terminus. It can also cleave other RNA substrates such as 4.5S RNA. The protein component plays an auxiliary but essential role in vivo by binding to the 5'-leader sequence and broadening the substrate specificity of the ribozyme. This Bifidobacterium longum (strain DJO10A) protein is Ribonuclease P protein component.